We begin with the raw amino-acid sequence, 704 residues long: MDTRFHCVYLLTSLDPQCEGDFYIGYSVNPLRRLRQHNGELVNGARRTGRRGRPWTIVCCVSGFPDDRTALKFEWCWQHPTASARLRHTIDILTGLRRLPYAVATLHLLVRASLFCQLDLTLHIFESAFLQEAAARAEVFLARRRGAFAVGGGLQAESPRVGTQQHSQRSSSLQGQADGVVTPPLPALDSQGELQGASTAAALATTTAASHLLPPLTPSLLLHVENTTREAFEDAYLSHDRCLLLPSAGMGVVVGEAGKEDSHMSASAGTSCPYDVSLLSQAARAEWSNASFASDSDDEDTRRLAPYCPSAGSSTPSPQRVRTAASPALLGYRSEERAGDGVWEASPGSSVGCGAALRSFSSPPPPRESSPRSASRPPVCTGINASASLAVDAPHGDVTAACPSSPAAAPAPQPRIPLRFADYGEVDFARAHAEEQHRLHHGLLPCSLCALPLQPSCLVYCSRAPFCTLRCHLSCLAMWMLYAEAEAAATIDGTDKSPALLSHAPPAPISPLRRLIPSQPCPCPLCGVLLHWGSLVKELKKRVVVERRLHAVQRRIRMEQRWQARLAHIEPTKRSTGAAMRRRQRARVGAAAALAKGAGKVPGAASTVPAPTMHAGPARRDAPRVSSPISFGEPTLTSFAAAASCPSPSASLAALSPTSASPISRHNGHSNTVTATHTAAAAAAASDASLLSLTDFCEEDWLLP.

The GIY-YIG domain maps to 4-90; it reads RFHCVYLLTS…TASARLRHTI (87 aa). 3 disordered regions span residues 157 to 180, 290 to 323, and 354 to 378; these read ESPRVGTQQHSQRSSSLQGQADGV, ASFASDSDDEDTRRLAPYCPSAGSSTPSPQRVRT, and GAALRSFSSPPPPRESSPRSASRPP. 2 stretches are compositionally biased toward polar residues: residues 161 to 175 and 311 to 320; these read VGTQQHSQRSSSLQG and AGSSTPSPQR. The segment at 446-526 adopts an SLX1-type zinc-finger fold; that stretch reads CSLCALPLQP…PSQPCPCPLC (81 aa). 2 disordered regions span residues 601 to 629 and 650 to 671; these read VPGAASTVPAPTMHAGPARRDAPRVSSPI and ASLAALSPTSASPISRHNGHSN. A compositionally biased stretch (low complexity) spans 650-662; sequence ASLAALSPTSASP.

It belongs to the SLX1 family. As to quaternary structure, forms a heterodimer with a member of the SLX4 family. A divalent metal cation is required as a cofactor.

It localises to the nucleus. Catalytic subunit of a heterodimeric structure-specific endonuclease that resolves DNA secondary structures generated during DNA repair and recombination. Has endonuclease activity towards branched DNA substrates, introducing single-strand cuts in duplex DNA close to junctions with ss-DNA. In Leishmania major, this protein is Structure-specific endonuclease subunit SLX1 homolog.